Consider the following 366-residue polypeptide: Carbamoyl phosphate synthase small chain (366 aa).

A CPSase region spans residues 1–172 (MYGILVLEDG…TYNAENEKTS (172 aa)). 3 residues coordinate L-glutamine: S45, G220, and G222. A Glutamine amidotransferase type-1 domain is found at 172-363 (SCVLIDCGVK…VELGIKFKAE (192 aa)). The active-site Nucleophile is C247. Residues L248, Q251, N289, G291, and F292 each contribute to the L-glutamine site. Active-site residues include H336 and E338.

The protein belongs to the CarA family. Composed of two chains; the small (or glutamine) chain promotes the hydrolysis of glutamine to ammonia, which is used by the large (or ammonia) chain to synthesize carbamoyl phosphate. Tetramer of heterodimers (alpha,beta)4.

It carries out the reaction hydrogencarbonate + L-glutamine + 2 ATP + H2O = carbamoyl phosphate + L-glutamate + 2 ADP + phosphate + 2 H(+). The enzyme catalyses L-glutamine + H2O = L-glutamate + NH4(+). It participates in amino-acid biosynthesis; L-arginine biosynthesis; carbamoyl phosphate from bicarbonate: step 1/1. Its pathway is pyrimidine metabolism; UMP biosynthesis via de novo pathway; (S)-dihydroorotate from bicarbonate: step 1/3. Its function is as follows. Small subunit of the glutamine-dependent carbamoyl phosphate synthetase (CPSase). CPSase catalyzes the formation of carbamoyl phosphate from the ammonia moiety of glutamine, carbonate, and phosphate donated by ATP, constituting the first step of 2 biosynthetic pathways, one leading to arginine and/or urea and the other to pyrimidine nucleotides. The small subunit (glutamine amidotransferase) binds and cleaves glutamine to supply the large subunit with the substrate ammonia. This Methanococcus maripaludis (strain C7 / ATCC BAA-1331) protein is Carbamoyl phosphate synthase small chain.